The following is an 87-amino-acid chain: MANHKSALKRHRQSIKRNLRNNMVRTRIKNVVKEVRSAVEANDTELAATALRKATSVLDKAATKKVIHARAAARRISRLSAAVNKMA.

Residues 1 to 19 (MANHKSALKRHRQSIKRNL) show a composition bias toward basic residues. Residues 1 to 22 (MANHKSALKRHRQSIKRNLRNN) form a disordered region.

This sequence belongs to the bacterial ribosomal protein bS20 family.

Binds directly to 16S ribosomal RNA. This is Small ribosomal subunit protein bS20 from Maridesulfovibrio salexigens (strain ATCC 14822 / DSM 2638 / NCIMB 8403 / VKM B-1763) (Desulfovibrio salexigens).